We begin with the raw amino-acid sequence, 681 residues long: Pentatricopeptide repeat-containing protein At2g22410, mitochondrial (681 aa).

A mitochondrion-targeting transit peptide spans 1 to 32 (MNISKAKLLLLPPPLTPKLNRSLYSHSQRRTR). PPR repeat units follow at residues 117-151 (NIFS…GCCE), 155-189 (DHFT…RLEL), 190-220 (VSHV…SPVR), 221-255 (DLVS…GVKP), 256-290 (DDVT…GLRM), 291-321 (TIPL…LEKR), 322-356 (TIVS…DVVL), 357-387 (WNAM…NTKP), 388-422 (DEIT…SLSL), 423-453 (NVAL…IQTR), 454-488 (NSLT…GIAP), 489-519 (DEIT…MKSR), and 525-555 (QLKH…MPME). Positions 560–635 (VWGALLFGCR…IPGCSSIEVN (76 aa)) are type E motif. The interval 636-666 (GIVCEFIVRDKSRPESEKIYDRLHCLGRHMR) is type E(+) motif.

It belongs to the PPR family. PCMP-E subfamily.

Its subcellular location is the mitochondrion. This is Pentatricopeptide repeat-containing protein At2g22410, mitochondrial (PCMP-E28) from Arabidopsis thaliana (Mouse-ear cress).